The primary structure comprises 299 residues: Porphobilinogen deaminase (299 aa).

Cysteine 242 is modified (S-(dipyrrolylmethanemethyl)cysteine).

Belongs to the HMBS family. Monomer. Requires dipyrromethane as cofactor.

The enzyme catalyses 4 porphobilinogen + H2O = hydroxymethylbilane + 4 NH4(+). It functions in the pathway porphyrin-containing compound metabolism; protoporphyrin-IX biosynthesis; coproporphyrinogen-III from 5-aminolevulinate: step 2/4. Functionally, tetrapolymerization of the monopyrrole PBG into the hydroxymethylbilane pre-uroporphyrinogen in several discrete steps. The protein is Porphobilinogen deaminase (hemC) of Rickettsia prowazekii (strain Madrid E).